The chain runs to 147 residues: D-aminoacyl-tRNA deacylase (147 aa).

Positions Gly136–Pro137 match the Gly-cisPro motif, important for rejection of L-amino acids motif.

This sequence belongs to the DTD family. As to quaternary structure, homodimer.

It is found in the cytoplasm. The enzyme catalyses glycyl-tRNA(Ala) + H2O = tRNA(Ala) + glycine + H(+). It catalyses the reaction a D-aminoacyl-tRNA + H2O = a tRNA + a D-alpha-amino acid + H(+). Its function is as follows. An aminoacyl-tRNA editing enzyme that deacylates mischarged D-aminoacyl-tRNAs. Also deacylates mischarged glycyl-tRNA(Ala), protecting cells against glycine mischarging by AlaRS. Acts via tRNA-based rather than protein-based catalysis; rejects L-amino acids rather than detecting D-amino acids in the active site. By recycling D-aminoacyl-tRNA to D-amino acids and free tRNA molecules, this enzyme counteracts the toxicity associated with the formation of D-aminoacyl-tRNA entities in vivo and helps enforce protein L-homochirality. In Streptococcus pneumoniae (strain Taiwan19F-14), this protein is D-aminoacyl-tRNA deacylase.